The chain runs to 383 residues: AP-1-like transcription factor YAP6 (383 aa).

Disordered regions lie at residues 1-64 (MQNP…ISVN), 83-113 (DYRS…SYNR), and 168-239 (TLPS…KAFR). The span at 13–64 (NQGSSSMATYNASEKNLNEHPSPQIAQPSTSQKLPYRINPTTTNGDTDISVN) shows a compositional bias: polar residues. The segment covering 88–101 (HQSPIHPSYIIPPH) has biased composition (low complexity). Polar residues predominate over residues 168 to 184 (TLPSRNTSVTTAPPSFQ). Residues 185–206 (NSADTAKNSADNNDNNDNVTKP) are compositionally biased toward low complexity. Polar residues predominate over residues 213–222 (QLISSSGKTL). One can recognise a bZIP domain in the interval 221-284 (TLRNTRRAAQ…NDNNILIAQH (64 aa)). Residues 223-247 (RNTRRAAQNRTAQKAFRQRKEKYIK) form a basic motif region. Positions 227–237 (RAAQNRTAQKA) are enriched in low complexity. The tract at residues 249-277 (LEQKSKIFDDLLAENNNFKSLNDSLRNDN) is leucine-zipper.

It belongs to the bZIP family. YAP subfamily. As to quaternary structure, homodimer.

It is found in the nucleus. Its function is as follows. Transcription activator involved in the regulation of genes expressed in response to environmental changes and metabolic requirements. According to genome-wide promoter binding and gene expression studies it regulates, among others, genes involved in ribosome biogenesis, protein synthesis, carbohydrate metabolism, and carbohydrate transport. It may also be involved in pleiotropic drug resistance. When overexpressed, it confers resistance to cisplatin, methylmethanosulfonate, and mitomycin C, and increases cellular tolerance to sodium and lithium. The chain is AP-1-like transcription factor YAP6 (YAP6) from Saccharomyces cerevisiae (strain ATCC 204508 / S288c) (Baker's yeast).